Reading from the N-terminus, the 152-residue chain is Flagellar assembly factor FliW (152 aa).

It belongs to the FliW family. Interacts with translational regulator CsrA and flagellin(s).

The protein resides in the cytoplasm. Acts as an anti-CsrA protein, binds CsrA and prevents it from repressing translation of its target genes, one of which is flagellin. Binds to flagellin and participates in the assembly of the flagellum. The polypeptide is Flagellar assembly factor FliW (Desulfitobacterium hafniense (strain DSM 10664 / DCB-2)).